The chain runs to 315 residues: GPN-loop GTPase 2 (315 aa).

Residue 12-17 coordinates GTP; sequence GSGKST. A Gly-Pro-Asn (GPN)-loop; involved in dimer interface motif is present at residues 69-71; it reads GPN. Residue 172-175 participates in GTP binding; the sequence is SKAD.

The protein belongs to the GPN-loop GTPase family. As to quaternary structure, heterodimers with gpn1 or fet5/gpn3. Binds to RNA polymerase II (RNAPII).

The protein resides in the cytoplasm. It is found in the nucleus. Its function is as follows. Small GTPase required for proper nuclear import of RNA polymerase II and III (RNAPII and RNAPIII). May act at an RNAP assembly step prior to nuclear import. This is GPN-loop GTPase 2 from Schizosaccharomyces pombe (strain 972 / ATCC 24843) (Fission yeast).